A 149-amino-acid chain; its full sequence is Transcriptional repressor NrdR (149 aa).

A zinc finger spans residues 3-34; it reads CPFCSAVDTKVIDSRLVGDGSQVRRRRQCLVC. An ATP-cone domain is found at 49 to 139; sequence PRVVKSNGVR…VYRSFEDVRE (91 aa).

This sequence belongs to the NrdR family. Zn(2+) serves as cofactor.

Negatively regulates transcription of bacterial ribonucleotide reductase nrd genes and operons by binding to NrdR-boxes. The protein is Transcriptional repressor NrdR of Edwardsiella ictaluri (strain 93-146).